The primary structure comprises 321 residues: Citrate synthase (321 aa).

Active-site residues include His-248 and Asp-306.

It belongs to the citrate synthase family.

The catalysed reaction is oxaloacetate + acetyl-CoA + H2O = citrate + CoA + H(+). It functions in the pathway carbohydrate metabolism; tricarboxylic acid cycle; isocitrate from oxaloacetate: step 1/2. This is Citrate synthase (gltA) from Bartonella elizabethae (Rochalimaea elizabethae).